The primary structure comprises 140 residues: Nucleoside diphosphate kinase (140 aa).

Residues Lys-11, Phe-59, Arg-87, Thr-93, Arg-104, and Asn-114 each contribute to the ATP site. His-117 acts as the Pros-phosphohistidine intermediate in catalysis.

Belongs to the NDK family. As to quaternary structure, homotetramer. Mg(2+) is required as a cofactor.

The protein resides in the cytoplasm. It catalyses the reaction a 2'-deoxyribonucleoside 5'-diphosphate + ATP = a 2'-deoxyribonucleoside 5'-triphosphate + ADP. The enzyme catalyses a ribonucleoside 5'-diphosphate + ATP = a ribonucleoside 5'-triphosphate + ADP. Its function is as follows. Major role in the synthesis of nucleoside triphosphates other than ATP. The ATP gamma phosphate is transferred to the NDP beta phosphate via a ping-pong mechanism, using a phosphorylated active-site intermediate. This chain is Nucleoside diphosphate kinase, found in Rhodospirillum rubrum (strain ATCC 11170 / ATH 1.1.1 / DSM 467 / LMG 4362 / NCIMB 8255 / S1).